A 300-amino-acid chain; its full sequence is MNLEVEIAGIKLKNPVIAASGTFGFGREYSKLIDISEFGAICTKGITLKKRIGNPQPRLCEVYAGIINSVGLENPGVEAFINDELPFLKSFDTKIIANINGFSKEEFVELTKILTSLVDMIEVNLSCPNVKEGGMVFGKDPKKVYEITKSVKDVASCPIIVKLTPNVTDITQLAVAAENAGADAISLINTVSAMAIDIETRKPLIKMVTGGLSGPAIKPIAVRMVYECFKKVRIPIIGMGGIMNYKDAIEFFIAGATAIQIGTVNFINPKAVCEIKEGIEAYLERKGFKSIKELVGSINI.

Residues Ser20 and Lys44–Gly45 contribute to the FMN site. Substrate is bound by residues Lys44 and Asn68–Leu72. FMN contacts are provided by Asn98 and Asn124. Residue Asn124 participates in substrate binding. The active-site Nucleophile is Cys127. FMN contacts are provided by Lys162 and Ile188. Position 189–190 (Asn189–Thr190) interacts with substrate. FMN-binding positions include Gly214, Gly240–Gly241, and Gly262–Thr263.

Belongs to the dihydroorotate dehydrogenase family. Type 1 subfamily. Heterotetramer of 2 PyrK and 2 PyrD type B subunits. Requires FMN as cofactor.

Its subcellular location is the cytoplasm. The enzyme catalyses (S)-dihydroorotate + NAD(+) = orotate + NADH + H(+). The protein operates within pyrimidine metabolism; UMP biosynthesis via de novo pathway; orotate from (S)-dihydroorotate (NAD(+) route): step 1/1. Functionally, catalyzes the conversion of dihydroorotate to orotate with NAD(+) as electron acceptor. The polypeptide is Dihydroorotate dehydrogenase B (NAD(+)), catalytic subunit (pyrD) (Caldicellulosiruptor bescii (strain ATCC BAA-1888 / DSM 6725 / KCTC 15123 / Z-1320) (Anaerocellum thermophilum)).